The following is a 258-amino-acid chain: E3 ubiquitin ligase TRIM40 (258 aa).

The RING-type zinc finger occupies 14-56 (CPICQESLKEAVSTNCGHLFCRVCLTQHVEKASASGVFCCPLC). The B box-type zinc finger occupies 66 to 107 (GTGYICPNHQKRVCRFCEESRLLLCVECLVSPEHMSHHELTI). 4 residues coordinate Zn(2+): C71, H74, C93, and H99. A coiled-coil region spans residues 107-159 (IENALSHYKERLNRRSRKLRKDIAELQRLKAQQEKKLQALQFQVDHGNHRLEA).

The protein belongs to the TRIM/RBCC family. In terms of assembly, interacts with NEDD8. Highly expressed in normal gastrointestinal epithelia but that is down-regulated in gastrointestinal carcinomas and chronic inflammatory lesions of the gastrointestinal tract.

It catalyses the reaction S-ubiquitinyl-[E2 ubiquitin-conjugating enzyme]-L-cysteine + [acceptor protein]-L-lysine = [E2 ubiquitin-conjugating enzyme]-L-cysteine + N(6)-ubiquitinyl-[acceptor protein]-L-lysine.. Its function is as follows. E3 ubiquitin-protein ligase that plays a role in the limitation of the innate immune response. Mediates inhibition of the RLR signaling pathway by ubiquitinating RIGI and IFIH1 receptors, leading to their proteasomal degradation. Also promotes the neddylation of IKBKG/NEMO, stabilizing NFKBIA, and thereby inhibiting of NF-kappa-B nuclear translocation and activation. The chain is E3 ubiquitin ligase TRIM40 (TRIM40) from Homo sapiens (Human).